The chain runs to 595 residues: MSEAEASSGMAHNAGPDEKTLQVLRDMANRLRIRSIKATNSSTTSYLIPCSNAEIMSVLFFYTMRYKQEDPENPDNDRCILSKGLPFVNVATGWPGQGLGAACGMAYTGKYFDQASYRVFCLLGDEESTEGSVWEAFAFASYYNLDNLMAIFDVNRIGHSSSMSVEHCIAIYQKRCEAFGWNTYVVDGRDVKTLCHVFSQAAQVRGKPTAVVAKTFKARGMPNVEDAESWYGRPMPKERADAIVKLIESQIQTNKILVPSPPIEDSPQINIMNICMTSPPVYVADDKVSTQRACGLALAKLGHENDRVIVLGSDTKNCNFSDIFKKEHPERFIQCCIAEQNMVNVALGCSTRDRTIVFAYSFAAFFTRAFDQIRLGAISQININLIGCHCGVSTGDDNPYHMALEDLAMFRAIPNCVVFYPSDAVSTEHAVYLAANTKEMCFIRTSQAETAIIYTTQETFQIGQAKVVRHSDNDKVIVIGAGVTLHEALVAAAELSKEDISIRVIDLFTIKPLDIATIISNAKATGGRIITVEDHYPEGGIGGAVCAAVSMEPNIVVHNLAVMDVPRSGRCNEALDFSGISSRHIIVAVKCILMT.

G93–P95 lines the thiamine diphosphate pocket. Positions 125, 155, and 157 each coordinate Mg(2+). N155 serves as a coordination point for thiamine diphosphate. 3 residues coordinate thiamine diphosphate: K217, E339, and F365. Catalysis depends on E339, which acts as the Proton donor. Substrate is bound by residues H389 and D397. Residue H401 coordinates thiamine diphosphate.

It belongs to the transketolase family. As to quaternary structure, homodimer. Requires Mg(2+) as cofactor. It depends on Ca(2+) as a cofactor. The cofactor is Mn(2+). Co(2+) serves as cofactor. Thiamine diphosphate is required as a cofactor. Not expressed in the embryonic neocortex.

It localises to the cytoplasm. The catalysed reaction is D-sedoheptulose 7-phosphate + D-glyceraldehyde 3-phosphate = aldehydo-D-ribose 5-phosphate + D-xylulose 5-phosphate. Its function is as follows. Catalyzes the transfer of a two-carbon ketol group from a ketose donor to an aldose acceptor, via a covalent intermediate with the cofactor thiamine pyrophosphate. In Mus musculus (Mouse), this protein is Transketolase-like protein 1.